Here is a 491-residue protein sequence, read N- to C-terminus: Tyrosine 3-monooxygenase (491 aa).

A Phosphoserine; by CaMK2 modification is found at S19. S31 carries the phosphoserine modification. S40 bears the Phosphoserine; by CaMK2 and PKA mark. 3 residues coordinate Fe cation: H324, H329, and E369. Position 465 is a phosphoserine (S465).

This sequence belongs to the biopterin-dependent aromatic amino acid hydroxylase family. As to quaternary structure, homotetramer. Interacts (when phosphorylated at Ser-19) with YWHAG; one YWHAG dimer bounds to one TH tetramer and this interaction may influence the phosphorylation and dephosphorylation of other sites. Interacts with NT5DC2; the interaction results in reduced phosphorylation and decreased catalytic activity of TH. It depends on Fe(2+) as a cofactor. Post-translationally, phosphorylated on Ser-19, Ser-31 and Ser-40 by several protein kinases with different site specificities. Phosphorylation at Ser-31 and Ser-40 leads to an increase of TH activity. Phosphorylation at Ser-40 activates the enzyme and also counteracts the feedback inhibition of TH by catecholamines. Phosphorylation of Ser-19 and Ser-31 triggers the proteasomal degradation of TH through the ubiquitin-proteasome pathway. Phosphorylation at Ser-31 facilitates transport of TH from the soma to the nerve terminals via the microtubule network. Phosphorylation at Ser-19 induces the high-affinity binding to the 14-3-3 protein YWHAG; this interaction may influence the phosphorylation and dephosphorylation of other sites. Ser-19 increases the phosphorylation at Ser-40 in a hierarchical manner, leading to increased activity.

Its subcellular location is the cytoplasm. It localises to the perinuclear region. It is found in the nucleus. The protein resides in the cell projection. The protein localises to the axon. Its subcellular location is the cytoplasmic vesicle. It localises to the secretory vesicle. It is found in the synaptic vesicle. It catalyses the reaction (6R)-L-erythro-5,6,7,8-tetrahydrobiopterin + L-tyrosine + O2 = (4aS,6R)-4a-hydroxy-L-erythro-5,6,7,8-tetrahydrobiopterin + L-dopa. Its pathway is catecholamine biosynthesis; dopamine biosynthesis; dopamine from L-tyrosine: step 1/2. With respect to regulation, inhibited in feedback fashion by the catecholamine neurotransmitters, especially by dopamine in competition with tetrahydrobiopterin. Phosphorylation of several Ser/Thr residues in the N-terminus regulates the catalytic activity. Ser-31 and Ser-40 are readily phosphorylated to activate the catalytic activity. A Cysteine modification induced by N-ethylmaleimide (NEM), inhibits tyrosine 3-monooxygenase activity through the modification of the Cys-170. In terms of biological role, catalyzes the conversion of L-tyrosine to L-dihydroxyphenylalanine (L-Dopa), the rate-limiting step in the biosynthesis of catecholamines, dopamine, noradrenaline, and adrenaline. Uses tetrahydrobiopterin and molecular oxygen to convert tyrosine to L-Dopa. In addition to tyrosine, is able to catalyze the hydroxylation of phenylalanine and tryptophan with lower specificity. Positively regulates the regression of retinal hyaloid vessels during postnatal development. In Bos taurus (Bovine), this protein is Tyrosine 3-monooxygenase (TH).